Consider the following 569-residue polypeptide: Estrogen receptor (569 aa).

The segment at 1-151 is modulating; that stretch reads MYPKEEHSAG…GFDSGKETRF (151 aa). Residues 28–37 are compositionally biased toward polar residues; the sequence is PTQTFGTSSP. The tract at residues 28 to 65 is disordered; that stretch reads PTQTFGTSSPAEPASVGYYPAPPDPHEEHLQTLGGGSS. 2 NR C4-type zinc fingers span residues 152 to 172 and 188 to 212; these read CAVC…CEGC and CPAT…LRKC. The segment at residues 152–217 is a DNA-binding region (nuclear receptor); it reads CAVCSDYASG…RLRKCYEVGM (66 aa). Residues 218-278 form a hinge region; sequence MKGGIRKDRG…SGGVVSTLCM (61 aa). The interval 223–271 is disordered; it reads RKDRGGRSVRRERRRSSNEDRDKSSSDQCSRAGVRTTGPQDKRKKRSGG. Over residues 237–247 the composition is skewed to basic and acidic residues; that stretch reads RSSNEDRDKSS. The NR LBD domain occupies 279–515; it reads SPDQVLLLLL…DLLLEMLDAQ (237 aa). A compositionally biased stretch (polar residues) spans 523-532; that stretch reads VQRVWSQSEK. A disordered region spans residues 523 to 569; the sequence is VQRVWSQSEKNPPSTPTTSSSSSNNSPRGGAAAIQSNGACHSHSPDP. The segment covering 538-549 has biased composition (low complexity); it reads PTTSSSSSNNSP.

This sequence belongs to the nuclear hormone receptor family. NR3 subfamily. As to quaternary structure, binds DNA as a homodimer. Can form a heterodimer with ER-beta.

Its subcellular location is the nucleus. Functionally, the steroid hormones and their receptors are involved in the regulation of eukaryotic gene expression and affect cellular proliferation and differentiation in target tissues. In Danio rerio (Zebrafish), this protein is Estrogen receptor (esr1).